Consider the following 304-residue polypeptide: Insulin-like growth factor 1 receptor (304 aa).

Fibronectin type-III domains lie at 1 to 43 (ERTV…TMPA) and 49 to 142 (IPGP…VQAK). Topologically, residues 1–147 (ERTVISNLRP…YVQAKTTYEN (147 aa)) are extracellular. N-linked (GlcNAc...) asparagine glycosylation is found at N115 and N128. Residues 148 to 168 (FIHLIIALPVAVLLIVGGLVI) traverse the membrane as a helical segment. Over 169–304 (MLYVFHRKRN…HMNGGRKNER (136 aa)) the chain is Cytoplasmic. Phosphoserine; by GSK3-beta is present on S225. S229 is modified (phosphoserine). The interval 231–304 (ENKPPEPEEL…HMNGGRKNER (74 aa)) is disordered. The segment covering 237 to 246 (PEELDLEPEN) has biased composition (acidic residues). Low complexity predominate over residues 247-263 (MESVPLDPSASSSSLPL). Basic and acidic residues predominate over residues 264–273 (PDRHSGHKAE).

It belongs to the protein kinase superfamily. Tyr protein kinase family. Insulin receptor subfamily. Tetramer of 2 alpha and 2 beta chains linked by disulfide bonds. The alpha chains contribute to the formation of the ligand-binding domain, while the beta chain carries the kinase domain. Forms a hybrid receptor with INSR, the hybrid is a tetramer consisting of 1 alpha chain and 1 beta chain of INSR and 1 alpha chain and 1 beta chain of IGF1R. Interacts with ARRB1 and ARRB2. Interacts with GRB10. Interacts with RACK1. Interacts with SOCS1, SOCS2 and SOCS3. Interacts with 14-3-3 proteins. Interacts with NMD2. Interacts with MAP3K5. Interacts with STAT3. Found in a ternary complex with IGF1 and ITGAV:ITGB3 or ITGA6:ITGB4. Interacts (nascent precursor form) with ZFAND2B. In terms of processing, autophosphorylated on tyrosine residues in response to ligand binding. Autophosphorylation occurs in trans, i.e. one subunit of the dimeric receptor phosphorylates tyrosine residues on the other subunit. Autophosphorylation occurs in a sequential manner. While every single phosphorylation increases kinase activity, all three tyrosine residues in the kinase activation loop have to be phosphorylated for optimal activity. Can be autophosphorylated at additional tyrosine residues (in vitro). May also be phosphorylated at tyrosine residues by mTORC2. Autophosphorylated is followed by phosphorylation of juxtamembrane tyrosines and C-terminal serines. Phosphorylation of Ser-225 by GSK-3beta restrains kinase activity and promotes cell surface expression, it requires a priming phosphorylation at Ser-229. Dephosphorylated by PTPN1. Post-translationally, polyubiquitinated in the activation loop through both 'Lys-48' and 'Lys-29' linkages, promoting receptor endocytosis and subsequent degradation by the proteasome. Ubiquitination is facilitated by pre-existing phosphorylation. Sumoylated with SUMO1. In terms of processing, controlled by regulated intramembrane proteolysis (RIP). Undergoes metalloprotease-dependent constitutive ectodomain shedding to produce a membrane-anchored 52 kDa C-Terminal fragment which is further processed by presenilin gamma-secretase to yield an intracellular 50 kDa fragment.

It localises to the cell membrane. It carries out the reaction L-tyrosyl-[protein] + ATP = O-phospho-L-tyrosyl-[protein] + ADP + H(+). With respect to regulation, activated by autophosphorylation at tyrosines in the kinase activation loop; phosphorylation at all three tyrosine residues is required for optimal kinase activity. Inhibited by MSC1609119A-1, BMS-754807, PQIP, benzimidazole pyridinone, isoquinolinedione, bis-azaindole, 3-cyanoquinoline, 2,4-bis-arylamino-1,3-pyrimidine, pyrrolopyrimidine, pyrrole-5-carboxaldehyde, picropodophyllin (PPP), tyrphostin derivatives. While most inhibitors bind to the ATP binding pocket, MSC1609119A-1 functions as allosteric inhibitor and binds close to the DFG motif and the activation loop. Functionally, receptor tyrosine kinase which mediates actions of insulin-like growth factor 1 (IGF1). Binds IGF1 with high affinity and IGF2 and insulin (INS) with a lower affinity. The activated IGF1R is involved in cell growth and survival control. IGF1R is crucial for tumor transformation and survival of malignant cell. Ligand binding activates the receptor kinase, leading to receptor autophosphorylation, and tyrosines phosphorylation of multiple substrates, that function as signaling adapter proteins including, the insulin-receptor substrates (IRS1/2), Shc and 14-3-3 proteins. Phosphorylation of IRSs proteins lead to the activation of two main signaling pathways: the PI3K-AKT/PKB pathway and the Ras-MAPK pathway. The result of activating the MAPK pathway is increased cellular proliferation, whereas activating the PI3K pathway inhibits apoptosis and stimulates protein synthesis. Phosphorylated IRS1 can activate the 85 kDa regulatory subunit of PI3K (PIK3R1), leading to activation of several downstream substrates, including protein AKT/PKB. AKT phosphorylation, in turn, enhances protein synthesis through mTOR activation and triggers the antiapoptotic effects of IGFIR through phosphorylation and inactivation of BAD. In parallel to PI3K-driven signaling, recruitment of Grb2/SOS by phosphorylated IRS1 or Shc leads to recruitment of Ras and activation of the ras-MAPK pathway. In addition to these two main signaling pathways IGF1R signals also through the Janus kinase/signal transducer and activator of transcription pathway (JAK/STAT). Phosphorylation of JAK proteins can lead to phosphorylation/activation of signal transducers and activators of transcription (STAT) proteins. In particular activation of STAT3, may be essential for the transforming activity of IGF1R. The JAK/STAT pathway activates gene transcription and may be responsible for the transforming activity. JNK kinases can also be activated by the IGF1R. IGF1 exerts inhibiting activities on JNK activation via phosphorylation and inhibition of MAP3K5/ASK1, which is able to directly associate with the IGF1R. When present in a hybrid receptor with INSR, binds IGF1. The chain is Insulin-like growth factor 1 receptor (IGF1R) from Sus scrofa (Pig).